We begin with the raw amino-acid sequence, 82 residues long: Putative antitoxin RelB1 (82 aa).

Its function is as follows. Antitoxin component of a type II toxin-antitoxin (TA) system. Its cognate toxin is RelE1 (Potential). The chain is Putative antitoxin RelB1 (relB1) from Methanocaldococcus jannaschii (strain ATCC 43067 / DSM 2661 / JAL-1 / JCM 10045 / NBRC 100440) (Methanococcus jannaschii).